Reading from the N-terminus, the 466-residue chain is MLGRVLKSAARSQRGLRSFATTTNLGPFTEISTLSNGLTVATESQPHAQTATVGVWIDAGSRAETDKTNGTAHFLEHMAFKGTGRRSQHALELEVENIGAHLNAYTSREQTVYYAKSFSKDVPVAVDIISDILQNSKLESGAIERERDVILREQQEVDKQLEEVVFDHLHAVAFQGQPLGRTILGPKNNILSIQRDDLASYIQTNYTADRMVLVGTGGVDHQSLVKLAEKHFSSLPVSANPLALGRLSSERKPTFVGSEARIRDDELPTAHVAIAVEGVGWSSPDYFPMMVMQSIFGNWDRSLGASSLLSSRLSHIISSNSLANSFMSFSTSYSDTGLWGIYLVSENLMNLDDTLHFTLKEWTRMSIAPTEGEVERAKSQLKAGLLLSLDGTTAVAEDIGRQIVTSGKRMTPAQIENAVDAVSVDDIKRVAQKYLWDKDFALAAFGNIDGLKDYGRIRNDMSSMLY.

His73 serves as a coordination point for Zn(2+). The Proton acceptor role is filled by Glu76. Zn(2+) contacts are provided by His77 and Glu153.

This sequence belongs to the peptidase M16 family. In terms of assembly, heterodimer of mppA (alpha) and mppB (beta) subunits, forming the mitochondrial processing protease (MPP) in which mppA is involved in substrate recognition and binding and mppB is the catalytic subunit. It depends on Zn(2+) as a cofactor.

It localises to the mitochondrion matrix. The enzyme catalyses Release of N-terminal transit peptides from precursor proteins imported into the mitochondrion, typically with Arg in position P2.. Its activity is regulated as follows. Binding to mppA is required for catalytic activity. In terms of biological role, catalytic subunit of the essential mitochondrial processing protease (MPP), which cleaves the mitochondrial sequence off newly imported precursors proteins. Preferentially, cleaves after an arginine at position P2. This chain is Mitochondrial-processing peptidase subunit beta (mppB), found in Lentinula edodes (Shiitake mushroom).